A 282-amino-acid chain; its full sequence is Polyamine aminopropyltransferase (282 aa).

Residues 11–239 (IEWYPRGYGV…SPWSFLVGVK (229 aa)) enclose the PABS domain. Gln36 contributes to the S-methyl-5'-thioadenosine binding site. Spermidine contacts are provided by His67 and Asp91. Residues Glu111 and 142 to 143 (DG) contribute to the S-methyl-5'-thioadenosine site. The Proton acceptor role is filled by Asp160. Spermidine is bound at residue 160-163 (DSTD). Residue Pro167 participates in S-methyl-5'-thioadenosine binding.

Belongs to the spermidine/spermine synthase family. In terms of assembly, homodimer or homotetramer.

Its subcellular location is the cytoplasm. It carries out the reaction S-adenosyl 3-(methylsulfanyl)propylamine + putrescine = S-methyl-5'-thioadenosine + spermidine + H(+). It participates in amine and polyamine biosynthesis; spermidine biosynthesis; spermidine from putrescine: step 1/1. Catalyzes the irreversible transfer of a propylamine group from the amino donor S-adenosylmethioninamine (decarboxy-AdoMet) to putrescine (1,4-diaminobutane) to yield spermidine. This Thermococcus onnurineus (strain NA1) protein is Polyamine aminopropyltransferase.